The following is a 571-amino-acid chain: S100P-binding protein (571 aa).

Over residues 270 to 280 (SDIPFDGDIDE) the composition is skewed to acidic residues. 2 disordered regions span residues 270 to 312 (SDIP…LESV) and 356 to 385 (NGQNNSNKVPLPPSDTAPGPQLPADPCSQS). Polar residues predominate over residues 299–309 (TSESTPASSEL). A compositionally biased stretch (pro residues) spans 365-378 (PLPPSDTAPGPQLP).

Its subcellular location is the nucleus. The sequence is that of S100P-binding protein (s100pbp) from Xenopus tropicalis (Western clawed frog).